The sequence spans 534 residues: Zinc finger protein 397 (534 aa).

Phosphoserine is present on Ser-31. Residues 50–132 enclose the SCAN box domain; sequence RQQFRKFCYQ…TLLEDLEREF (83 aa). Glycyl lysine isopeptide (Lys-Gly) (interchain with G-Cter in SUMO2) cross-links involve residues Lys-55, Lys-171, Lys-202, and Lys-252. The segment at 197 to 242 is disordered; the sequence is DISGEKSQRLSQEPSFGGFSEHKSSLEWQQGSAPGETLRRSPSQRA. C2H2-type zinc fingers lie at residues 285–307, 313–335, 341–363, 369–391, 397–419, 425–447, 453–475, 481–503, and 509–531; these read YRCD…QRIH, YKCN…QRIH, YECS…RKIH, CKCN…QRIH, YECN…QRIH, YQCN…QRIH, and YICS…QRVH.

It belongs to the krueppel C2H2-type zinc-finger protein family.

The protein resides in the nucleus. Functionally, DNA-dependent transcriptional repressor. The sequence is that of Zinc finger protein 397 (ZNF397) from Bos taurus (Bovine).